The following is a 388-amino-acid chain: Chalcone synthase DIV (388 aa).

The active site involves Cys-164.

It belongs to the thiolase-like superfamily. Chalcone/stilbene synthases family.

The catalysed reaction is (E)-4-coumaroyl-CoA + 3 malonyl-CoA + 3 H(+) = 2',4,4',6'-tetrahydroxychalcone + 3 CO2 + 4 CoA. It functions in the pathway secondary metabolite biosynthesis; flavonoid biosynthesis. Functionally, the primary product of this enzyme is 4,2',4',6'-tetrahydroxychalcone (also termed naringenin-chalcone or chalcone) which can under specific conditions spontaneously isomerize into naringenin. In Ipomoea batatas (Sweet potato), this protein is Chalcone synthase DIV (CHS-DIV).